Here is a 372-residue protein sequence, read N- to C-terminus: N-methyl-L-tryptophan oxidase (372 aa).

4 to 34 (DLIIIGSGSVGAAAGYYATRAGLNVLMTDAH) lines the FAD pocket. An S-8alpha-FAD cysteine modification is found at Cys-308.

The protein belongs to the MSOX/MTOX family. MTOX subfamily. In terms of assembly, monomer. FAD serves as cofactor.

It carries out the reaction N(alpha)-methyl-L-tryptophan + O2 + H2O = L-tryptophan + formaldehyde + H2O2. Catalyzes the oxidative demethylation of N-methyl-L-tryptophan. The sequence is that of N-methyl-L-tryptophan oxidase from Escherichia coli O139:H28 (strain E24377A / ETEC).